Here is a 595-residue protein sequence, read N- to C-terminus: Aspartate--tRNA(Asp/Asn) ligase (595 aa).

L-aspartate is bound at residue Glu175. The aspartate stretch occupies residues 199–202 (QQFK). Residues Arg221 and His451 each coordinate L-aspartate. 221-223 (RDE) provides a ligand contact to ATP. Glu485 is a binding site for ATP. Residue Arg492 coordinates L-aspartate. 537–540 (GVDR) contacts ATP.

The protein belongs to the class-II aminoacyl-tRNA synthetase family. Type 1 subfamily. In terms of assembly, homodimer.

It localises to the cytoplasm. The catalysed reaction is tRNA(Asx) + L-aspartate + ATP = L-aspartyl-tRNA(Asx) + AMP + diphosphate. Functionally, aspartyl-tRNA synthetase with relaxed tRNA specificity since it is able to aspartylate not only its cognate tRNA(Asp) but also tRNA(Asn). Reaction proceeds in two steps: L-aspartate is first activated by ATP to form Asp-AMP and then transferred to the acceptor end of tRNA(Asp/Asn). This chain is Aspartate--tRNA(Asp/Asn) ligase, found in Acidiphilium cryptum (strain JF-5).